Here is a 439-residue protein sequence, read N- to C-terminus: Choline monooxygenase, chloroplastic (439 aa).

Residues 1 to 60 (MMAASASATTMLLKYPTTVCGIPNPSSNNNNDPSNNIVSIPQNTTNPTLKSRTPNKITTN) constitute a chloroplast transit peptide. Residues 24-41 (NPSSNNNNDPSNNIVSIP) are compositionally biased toward low complexity. The interval 24 to 54 (NPSSNNNNDPSNNIVSIPQNTTNPTLKSRTP) is disordered. Residues 42–54 (QNTTNPTLKSRTP) show a composition bias toward polar residues. The Rieske domain maps to 120 to 227 (WQVAGISDQI…VAVWGPFVLI (108 aa)). Cys162, His164, Cys181, and His184 together coordinate [2Fe-2S] cluster. His287 and His292 together coordinate Fe cation.

Homotrimer or homodimer. The cofactor is [2Fe-2S] cluster. It depends on Fe cation as a cofactor. Mg(2+) serves as cofactor. In terms of tissue distribution, expressed in leaves.

The protein resides in the plastid. Its subcellular location is the chloroplast stroma. It catalyses the reaction choline + 2 reduced [2Fe-2S]-[ferredoxin] + O2 + 2 H(+) = betaine aldehyde hydrate + 2 oxidized [2Fe-2S]-[ferredoxin] + H2O. It functions in the pathway amine and polyamine biosynthesis; betaine biosynthesis via choline pathway; betaine aldehyde from choline (monooxygenase route): step 1/1. Catalyzes the first step of the osmoprotectant glycine betaine synthesis. This chain is Choline monooxygenase, chloroplastic (CMO), found in Spinacia oleracea (Spinach).